The chain runs to 237 residues: Putative N-acetylmuramoyl-L-alanine amidase (237 aa).

The 219-residue stretch at 7 to 225 (ILIDAGHGGY…IANSIYLGLK (219 aa)) folds into the MurNAc-LAA domain.

The protein belongs to the N-acetylmuramoyl-L-alanine amidase 3 family.

It is found in the secreted. It catalyses the reaction Hydrolyzes the link between N-acetylmuramoyl residues and L-amino acid residues in certain cell-wall glycopeptides.. In terms of biological role, cell-wall hydrolase involved in septum cleavage during cell division. In Buchnera aphidicola subsp. Acyrthosiphon pisum (strain APS) (Acyrthosiphon pisum symbiotic bacterium), this protein is Putative N-acetylmuramoyl-L-alanine amidase (amiB).